Reading from the N-terminus, the 93-residue chain is UPF0223 protein LACR_0546 (93 aa).

It belongs to the UPF0223 family.

The protein is UPF0223 protein LACR_0546 of Lactococcus lactis subsp. cremoris (strain SK11).